Here is a 510-residue protein sequence, read N- to C-terminus: Bifunctional purine biosynthesis protein PurH (510 aa).

One can recognise an MGS-like domain in the interval 1 to 142 (MRALLSVSDK…KNYKDVMVLC (142 aa)).

This sequence belongs to the PurH family.

It carries out the reaction (6R)-10-formyltetrahydrofolate + 5-amino-1-(5-phospho-beta-D-ribosyl)imidazole-4-carboxamide = 5-formamido-1-(5-phospho-D-ribosyl)imidazole-4-carboxamide + (6S)-5,6,7,8-tetrahydrofolate. The catalysed reaction is IMP + H2O = 5-formamido-1-(5-phospho-D-ribosyl)imidazole-4-carboxamide. The protein operates within purine metabolism; IMP biosynthesis via de novo pathway; 5-formamido-1-(5-phospho-D-ribosyl)imidazole-4-carboxamide from 5-amino-1-(5-phospho-D-ribosyl)imidazole-4-carboxamide (10-formyl THF route): step 1/1. Its pathway is purine metabolism; IMP biosynthesis via de novo pathway; IMP from 5-formamido-1-(5-phospho-D-ribosyl)imidazole-4-carboxamide: step 1/1. The chain is Bifunctional purine biosynthesis protein PurH from Campylobacter jejuni (strain RM1221).